We begin with the raw amino-acid sequence, 876 residues long: Extended synaptotagmin-2-B (876 aa).

Residues 1-21 (MASESGAEKGPPTTPAENGQP) are disordered. At 1 to 35 (MASESGAEKGPPTTPAENGQPGVPIAAAVAADEQG) the chain is on the cytoplasmic side. A helical membrane pass occupies residues 36 to 56 (MISVDIAGLFYQFSKTFILIF). Over 57 to 59 (PVY) the chain is Lumenal. A helical membrane pass occupies residues 60–80 (VLGYFGLSFSWLLIALVLLLW). At 81–876 (WRRNKGNKNS…EDGTRAAASS (796 aa)) the chain is on the cytoplasmic side. Residues 123–302 (DIERAEWLNK…LPNRITVPLV (180 aa)) form the SMP-LTD domain. 2 consecutive C2 domains span residues 301–421 (LVSD…DEWF) and 446–592 (NLDQ…HLNN). Ca(2+) contacts are provided by Lys-332, Asp-333, Asp-345, Asp-392, Glu-393, Asp-394, Asp-396, Asp-398, and Asp-399. A disordered region spans residues 614–714 (VRSPDEQHTS…KEPTPSIASD (101 aa)). Positions 636-656 (PPTPQMPAPSPAVAHKPPPTP) are enriched in pro residues. The span at 686 to 698 (SSSSLSGSSFTYS) shows a compositional bias: low complexity. Positions 741-863 (PLGQIQLTIR…DAAKGWTQWF (123 aa)) constitute a C2 3 domain. The required for phosphatidylinositol 4,5-bisphosphate-dependent location at the cell membrane stretch occupies residues 788-795 (KRRSGRRK).

Belongs to the extended synaptotagmin family. Interacts with fgfr1 that has been activated by fgf1 binding. Interacts (via C2 domains) with the AP-2 complex (via an alpha subunit). Identified in a complex with the AP-2 complex and fgfr1.

Its subcellular location is the cell membrane. The protein localises to the endoplasmic reticulum membrane. Its function is as follows. Tethers the endoplasmic reticulum to the cell membrane and promotes the formation of appositions between the endoplasmic reticulum and the cell membrane. Binds glycerophospholipids in a barrel-like domain and may play a role in cellular lipid transport. Plays a role in the rapid internalization of fgfr1 that has been activated by fgf1 binding; this occurs most likely via the AP-2 complex. Required for normal fgf signaling and the activation of downstream signaling cascades via its role in the internalization of activated fgfr1. Required for normal embryonic development via its role in fgf signaling and the downstream regulation of t/xBRA expression. The chain is Extended synaptotagmin-2-B (esyt2-b) from Xenopus laevis (African clawed frog).